We begin with the raw amino-acid sequence, 339 residues long: NADPH dehydrogenase (339 aa).

FMN is bound at residue 24-27 (SPMC). Residue Tyr29 coordinates substrate. 2 residues coordinate FMN: Ala61 and Gln103. Position 165–168 (165–168 (HGAH)) interacts with substrate. FMN-binding positions include Arg216 and 308 to 309 (AR).

It belongs to the NADH:flavin oxidoreductase/NADH oxidase family. NamA subfamily. As to quaternary structure, homotetramer. It depends on FMN as a cofactor.

It catalyses the reaction A + NADPH + H(+) = AH2 + NADP(+). Functionally, catalyzes the reduction of the double bond of an array of alpha,beta-unsaturated aldehydes and ketones. It also reduces the nitro group of nitroester and nitroaromatic compounds. It could have a role in detoxification processes. This Bacillus licheniformis (strain ATCC 14580 / DSM 13 / JCM 2505 / CCUG 7422 / NBRC 12200 / NCIMB 9375 / NCTC 10341 / NRRL NRS-1264 / Gibson 46) protein is NADPH dehydrogenase.